A 267-amino-acid chain; its full sequence is Transcription factor HES-1 (267 aa).

A disordered region spans residues 1-45 (MPADLMEKNSSSPVAATPASMSNTPDKPKTASEHRKSSKPIMEKR). Residues 8–25 (KNSSSPVAATPASMSNTP) are compositionally biased toward polar residues. The segment covering 26–35 (DKPKTASEHR) has biased composition (basic and acidic residues). Positions 34 to 91 (HRKSSKPIMEKRRRARINESLGQLKTLILDALKKDSSRHSKLEKADILEMTVKHLRNL) constitute a bHLH domain. The region spanning 110–143 (YRAGFSECMNEVTRFLSTCEGVNTDVRTRLLGHL) is the Orange domain. Residues 264–267 (WRPW) carry the WRPW motif motif.

Transcription repression requires formation of a complex with a corepressor protein of the Groucho/TLE family. Interacts with the bHLH protein hes2, and binds DNA in the form of a heterodimer with the bHLH protein hey1/hrt1. Interacts with the bHLH protein hes6; this interaction may inhibit the transcriptional repressor activity.

It is found in the nucleus. Functionally, transcriptional repressor of a subset of early mesodermal genes including myod1 and t/bra. Binds DNA on N-box motifs: 5'-CACNAG-3'. Acts as a negative regulator of myogenesis, mediating Notch signaling to repress expression of myod1. This Xenopus tropicalis (Western clawed frog) protein is Transcription factor HES-1.